The chain runs to 90 residues: Phosphocarrier protein HPr (90 aa).

An HPr domain is found at 1–89 (MPALEITIIN…ELINNRFDEG (89 aa)). His-15 serves as the catalytic Pros-phosphohistidine intermediate.

It belongs to the HPr family.

The protein resides in the cytoplasm. Its function is as follows. General (non sugar-specific) component of the phosphoenolpyruvate-dependent sugar phosphotransferase system (sugar PTS). This major carbohydrate active-transport system catalyzes the phosphorylation of incoming sugar substrates concomitantly with their translocation across the cell membrane. The phosphoryl group from phosphoenolpyruvate (PEP) is transferred to the phosphoryl carrier protein HPr by enzyme I. Phospho-HPr then transfers it to the PTS EIIA domain. This Pseudomonas aeruginosa (strain ATCC 15692 / DSM 22644 / CIP 104116 / JCM 14847 / LMG 12228 / 1C / PRS 101 / PAO1) protein is Phosphocarrier protein HPr (ptsH).